Here is a 434-residue protein sequence, read N- to C-terminus: Alpha-enolase (434 aa).

Residue S40 participates in Mg(2+) binding. The substrate site is built by H158 and E167. E210 acts as the Proton donor in catalysis. D245, E293, and D318 together coordinate Mg(2+). E293 and D318 together coordinate substrate. The active-site Proton acceptor is the K343. Substrate is bound by residues 370–373 (SHRS) and K394.

The protein belongs to the enolase family. In terms of assembly, homodimer. Mg(2+) serves as cofactor.

It is found in the cytoplasm. The catalysed reaction is (2R)-2-phosphoglycerate = phosphoenolpyruvate + H2O. Its pathway is carbohydrate degradation; glycolysis; pyruvate from D-glyceraldehyde 3-phosphate: step 4/5. This chain is Alpha-enolase, found in Sceloporus undulatus (Eastern fence lizard).